A 155-amino-acid chain; its full sequence is MFVALPFLIFYASFSLLLGIYDARTGLLPDRFTCPLLWGGLLYHQICLPERLPDALWGAIAGYGGFALIYWGYRLRYQKEGLGYGDVKYLAALGAWHCWETLPLLVFLAAMLACGGFGVALLVRGKSALINPLPFGPWLAVAGFITGWKVFFPDG.

It belongs to the peptidase A24 family.

This chain is Leader peptidase HopD (hopD), found in Salmonella typhimurium (strain LT2 / SGSC1412 / ATCC 700720).